A 354-amino-acid polypeptide reads, in one-letter code: Glyceraldehyde-3-phosphate dehydrogenase (354 aa).

NAD(+) contacts are provided by residues 11–12 and G108; that span reads TI. Residue 137-139 coordinates D-glyceraldehyde 3-phosphate; the sequence is SCN. The Nucleophile role is filled by C138. R166 serves as a coordination point for NAD(+). A D-glyceraldehyde 3-phosphate-binding site is contributed by 192–193; sequence HG. Residue Q299 participates in NAD(+) binding.

This sequence belongs to the glyceraldehyde-3-phosphate dehydrogenase family. As to quaternary structure, homotetramer.

The protein localises to the cytoplasm. It catalyses the reaction D-glyceraldehyde 3-phosphate + phosphate + NADP(+) = (2R)-3-phospho-glyceroyl phosphate + NADPH + H(+). The enzyme catalyses D-glyceraldehyde 3-phosphate + phosphate + NAD(+) = (2R)-3-phospho-glyceroyl phosphate + NADH + H(+). The protein operates within carbohydrate degradation; glycolysis; pyruvate from D-glyceraldehyde 3-phosphate: step 1/5. This chain is Glyceraldehyde-3-phosphate dehydrogenase, found in Haloarcula marismortui (strain ATCC 43049 / DSM 3752 / JCM 8966 / VKM B-1809) (Halobacterium marismortui).